The primary structure comprises 252 residues: Imidazole glycerol phosphate synthase subunit HisF (252 aa).

Active-site residues include Asp11 and Asp130.

This sequence belongs to the HisA/HisF family. Heterodimer of HisH and HisF.

Its subcellular location is the cytoplasm. The enzyme catalyses 5-[(5-phospho-1-deoxy-D-ribulos-1-ylimino)methylamino]-1-(5-phospho-beta-D-ribosyl)imidazole-4-carboxamide + L-glutamine = D-erythro-1-(imidazol-4-yl)glycerol 3-phosphate + 5-amino-1-(5-phospho-beta-D-ribosyl)imidazole-4-carboxamide + L-glutamate + H(+). The protein operates within amino-acid biosynthesis; L-histidine biosynthesis; L-histidine from 5-phospho-alpha-D-ribose 1-diphosphate: step 5/9. IGPS catalyzes the conversion of PRFAR and glutamine to IGP, AICAR and glutamate. The HisF subunit catalyzes the cyclization activity that produces IGP and AICAR from PRFAR using the ammonia provided by the HisH subunit. This chain is Imidazole glycerol phosphate synthase subunit HisF, found in Rhodospirillum rubrum (strain ATCC 11170 / ATH 1.1.1 / DSM 467 / LMG 4362 / NCIMB 8255 / S1).